A 361-amino-acid polypeptide reads, in one-letter code: Septin-12 (361 aa).

The Septin-type G domain maps to 45–316 (MGFEFNIMVV…ENYRIIRLKE (272 aa)). Residues 45-318 (MGFEFNIMVV…YRIIRLKESH (274 aa)) are interaction with SEPTIN7. A G1 motif region spans residues 55–62 (GQSGLGKS). Residues 55-62 (GQSGLGKS), threonine 88, glycine 114, 194-202 (RADSLTIEE), glycine 250, and arginine 265 contribute to the GTP site. The tract at residues 111 to 114 (DTPG) is G3 motif. The interval 193–196 (ARAD) is G4 motif. The segment at 257–361 (VNGRCVLGRK…WAEDNSDEDF (105 aa)) is self-association (via N-terminus) to polymerize octameric septin 12-7-6-2/4-2/4-6-7-12 filaments. The segment at 333–361 (PPPAPTGTRASPGPAKMCRWAEDNSDEDF) is disordered. Positions 338 to 347 (TGTRASPGPA) are enriched in low complexity.

This sequence belongs to the TRAFAC class TrmE-Era-EngA-EngB-Septin-like GTPase superfamily. Septin GTPase family. In terms of assembly, septins polymerize into heterooligomeric protein complexes that form filaments, and can associate with cellular membranes, actin filaments and microtubules. GTPase activity is required for filament formation. Interacts with SEPTIN6 and SEPTIN11. Component of a octameric complex consisting of SEPTIN12, SEPTIN7, SEPTIN6 and SEPTIN2 or SEPTIN4 in the order 12-7-6-2-2-6-7-12 or 12-7-6-4-4-6-7-12 and located in the sperm annulus; the octamer polymerizes into filaments via the SEPTIN12 N- and C-termini; the SEPTIN12:SEPTIN7 association is mediated by the GTP-binding domains. Interacts with SPAG4 and LMNB1. Associates with alpha- and beta-tubulins.

Its subcellular location is the cytoplasm. It is found in the cytoskeleton. It localises to the spindle. The protein localises to the cell projection. The protein resides in the cilium. Its subcellular location is the flagellum. In terms of biological role, filament-forming cytoskeletal GTPase. May play a role in cytokinesis (Potential). Involved in spermatogenesis. Involved in the morphogenesis of sperm heads and the elongation of sperm tails probably implicating the association with alpha- and beta-tubulins. Forms a filamentous structure with SEPTIN7, SEPTIN6, SEPTIN2 and probably SEPTIN4 at the sperm annulus which is required for the structural integrity and motility of the sperm tail during postmeiotic differentiation. This Bos taurus (Bovine) protein is Septin-12.